The chain runs to 355 residues: MSGQPKRLMVMAGGTGGHVFPGLAVAHHLMAQGWQVRWLGTADRMEADLVPKHGINIEFIRISGLRGKGVKALLAAPLRIFNAWRQARAIMKRFKPDVVLGMGGYVSGPGGLAAWSLGIPVVLHEQNGIAGLTNKWLAKIATTVMQAFPGAFPNAEVVGNPVRTDVLALPLPQTRLVSRDGPIRVLVVGGSQGARVLNQTLPQVAARLGDAVTIWHQSGKGAQHTVEQAYAEAGQPQHKVTEFIDDMAAAYAWADVVVCRSGALTVSEIAAAGLPAIFVPFQHKDRQQYWNALPLENAGAAKILEQPQFTAEAVADTLAGWSRDTLLTMAERARAVSILDATERVASEVIRVART.

Residues 15-17 (TGG), N127, R163, S191, I244, 263-268 (ALTVSE), and Q288 contribute to the UDP-N-acetyl-alpha-D-glucosamine site.

This sequence belongs to the glycosyltransferase 28 family. MurG subfamily.

It is found in the cell inner membrane. The catalysed reaction is di-trans,octa-cis-undecaprenyl diphospho-N-acetyl-alpha-D-muramoyl-L-alanyl-D-glutamyl-meso-2,6-diaminopimeloyl-D-alanyl-D-alanine + UDP-N-acetyl-alpha-D-glucosamine = di-trans,octa-cis-undecaprenyl diphospho-[N-acetyl-alpha-D-glucosaminyl-(1-&gt;4)]-N-acetyl-alpha-D-muramoyl-L-alanyl-D-glutamyl-meso-2,6-diaminopimeloyl-D-alanyl-D-alanine + UDP + H(+). It participates in cell wall biogenesis; peptidoglycan biosynthesis. Cell wall formation. Catalyzes the transfer of a GlcNAc subunit on undecaprenyl-pyrophosphoryl-MurNAc-pentapeptide (lipid intermediate I) to form undecaprenyl-pyrophosphoryl-MurNAc-(pentapeptide)GlcNAc (lipid intermediate II). This chain is UDP-N-acetylglucosamine--N-acetylmuramyl-(pentapeptide) pyrophosphoryl-undecaprenol N-acetylglucosamine transferase, found in Salmonella arizonae (strain ATCC BAA-731 / CDC346-86 / RSK2980).